The sequence spans 358 residues: MELMTTYKSNNYPIIIKNNAITELTELLKPYRDVVFIVDKNVEFALPEKIQQALSSTSSEQFTHILKVEGNETTKTFAVYQHIIEELLEQSITRNTCIIAIGGGVIGDFAGFVAATILRGVDFIQVPTTILAHDSSVGGKVGINTPQGKNLVGAFYRPTAVLYDLDFLNTLPYTEISSGYAEVYKHALLNGEEAQLEIETAFPDKKALESLVSLDKFLLKGIQTKLNIVIEDEHEQGKRKFLNLGHTFGHAIEYNQKIPHGHAVMIGILYQFIVANELLNTQFDIMHYINYFKNLDYPLEKVLDTNFEPLLALMSKDKKNDKSGIQMVLLKEIGKPKVIHVNNEVLEKSFATLQNYLK.

NAD(+)-binding positions include 104-108 (GVIGD), 128-129 (TT), lysine 140, lysine 149, and 167-170 (FLNT). Zn(2+) contacts are provided by glutamate 182, histidine 246, and histidine 260.

The protein belongs to the sugar phosphate cyclases superfamily. Dehydroquinate synthase family. Co(2+) is required as a cofactor. Requires Zn(2+) as cofactor. The cofactor is NAD(+).

The protein localises to the cytoplasm. The catalysed reaction is 7-phospho-2-dehydro-3-deoxy-D-arabino-heptonate = 3-dehydroquinate + phosphate. Its pathway is metabolic intermediate biosynthesis; chorismate biosynthesis; chorismate from D-erythrose 4-phosphate and phosphoenolpyruvate: step 2/7. Catalyzes the conversion of 3-deoxy-D-arabino-heptulosonate 7-phosphate (DAHP) to dehydroquinate (DHQ). The chain is 3-dehydroquinate synthase from Staphylococcus carnosus (strain TM300).